We begin with the raw amino-acid sequence, 125 residues long: MNRLYQNCMFLYVYTDVCVRLCASIFYIMLEAKFALRIPALRPSYTWGQWRSFIQSSFYGRTFVAFSGPSMKNYITICFLLKSIEVSVDRTALHGTSAEASASNFQRIQTKNLSKYNCNIPACCV.

The chain crosses the membrane as a helical span at residues 7–29; the sequence is NCMFLYVYTDVCVRLCASIFYIM.

Its subcellular location is the membrane. This is an uncharacterized protein from Saccharomyces cerevisiae (strain ATCC 204508 / S288c) (Baker's yeast).